The following is a 274-amino-acid chain: Proliferating cell nuclear antigen 1 (274 aa).

The DNA-binding element occupies 61-80 (RCDRERVLGVNIASLNKVFK).

The protein belongs to the PCNA family. As to quaternary structure, homotrimer. Interacts with ORC1 (via PIP-box motif); the interaction occurs during DNA replication in trophozoites. Interacts with ORC5; the interaction occurs during the trophozoite stage but not at the late schizont stage. Interacts with FEN1.

The protein resides in the nucleus. Its subcellular location is the chromosome. The protein localises to the cytoplasm. Functionally, auxiliary protein of DNA polymerase delta and is involved in the control of DNA replication by increasing the polymerase processibility during elongation of the leading strand. Involved in DNA damage response. The protein is Proliferating cell nuclear antigen 1 of Plasmodium falciparum (isolate 3D7).